A 339-amino-acid chain; its full sequence is Cyclin-Y-like protein 1 (339 aa).

Positions 181–263 constitute a Cyclin N-terminal domain; sequence QLTAECAIVT…FLELLQFNIN (83 aa).

This sequence belongs to the cyclin family. Cyclin Y subfamily.

It localises to the cell membrane. In terms of biological role, key regulator of Wnt signaling implicated in various biological processes such as embryonic neurogenesis. This chain is Cyclin-Y-like protein 1 (ccnyl1), found in Danio rerio (Zebrafish).